Here is a 972-residue protein sequence, read N- to C-terminus: Isoleucine--tRNA ligase (972 aa).

The short motif at 63–73 (PYANGNIHIGH) is the 'HIGH' region element. Glu603 contributes to the L-isoleucyl-5'-AMP binding site. The short motif at 644-648 (KMSKS) is the 'KMSKS' region element. Lys647 provides a ligand contact to ATP.

Belongs to the class-I aminoacyl-tRNA synthetase family. IleS type 1 subfamily. In terms of assembly, monomer.

It is found in the cytoplasm. The enzyme catalyses tRNA(Ile) + L-isoleucine + ATP = L-isoleucyl-tRNA(Ile) + AMP + diphosphate. Functionally, catalyzes the attachment of isoleucine to tRNA(Ile). As IleRS can inadvertently accommodate and process structurally similar amino acids such as valine, to avoid such errors it has two additional distinct tRNA(Ile)-dependent editing activities. One activity is designated as 'pretransfer' editing and involves the hydrolysis of activated Val-AMP. The other activity is designated 'posttransfer' editing and involves deacylation of mischarged Val-tRNA(Ile). This is Isoleucine--tRNA ligase from Brucella suis biovar 1 (strain 1330).